The following is a 425-amino-acid chain: CinA-like protein (425 aa).

Belongs to the CinA family.

This Mycobacterium marinum (strain ATCC BAA-535 / M) protein is CinA-like protein.